Consider the following 137-residue polypeptide: Large ribosomal subunit protein uL16 (137 aa).

The interval methionine 1–histidine 22 is disordered.

This sequence belongs to the universal ribosomal protein uL16 family. Part of the 50S ribosomal subunit.

Binds 23S rRNA and is also seen to make contacts with the A and possibly P site tRNAs. This Saccharophagus degradans (strain 2-40 / ATCC 43961 / DSM 17024) protein is Large ribosomal subunit protein uL16.